Consider the following 1315-residue polypeptide: Myopalladin (1315 aa).

4 disordered regions span residues 19–60 (SYLA…DLPD), 81–145 (INHD…TQSK), 166–204 (HSSK…TERR), and 230–266 (EAKR…LGQP). Basic and acidic residues-rich tracts occupy residues 23–35 (ETRH…RSRA) and 84–104 (DPLE…DQTK). Phosphoserine occurs at positions 99 and 129. Basic residues predominate over residues 166–180 (HSSKRIRPRACKNHK). Residues 184–199 (ESQNKVLQENSPTFSD) show a composition bias toward polar residues. The stretch at 219–240 (DNELNHAIEQREAKRREAELAA) forms a coiled coil. At Thr-249 the chain carries Phosphothreonine. The region spanning 267 to 357 (PRFTQKLRSR…DSTSAEIYIE (91 aa)) is the Ig-like 1 domain. A disulfide bridge links Cys-288 with Cys-339. Positions 359–392 (VSSSDSEGDPNKEEMNRIQKPNEVSSPPTTSAAI) are disordered. An Ig-like 2 domain is found at 432-528 (PVFTKMLQNL…GTVSSIAQLD (97 aa)). Residues Cys-453 and Cys-512 are joined by a disulfide bond. Disordered regions lie at residues 535-652 (ISDN…VLAK), 674-704 (LQNT…SSKQ), and 725-747 (SSTS…NTPQ). Residues 609 to 623 (SSGSGAANTSQTRPN) are compositionally biased toward polar residues. Residue Ser-641 is modified to Phosphoserine. Residues 725-741 (SSTSTATVSPSSSPVFT) are compositionally biased toward low complexity. Phosphoserine is present on Ser-754. 2 disordered regions span residues 762 to 814 (HPST…TPVS) and 840 to 865 (NAMG…KAPQ). Pro residues predominate over residues 779-790 (PAPPSPAEPAAP). Ser-809 and Ser-814 each carry phosphoserine. Phosphoserine is present on residues Ser-903 and Ser-924. 3 consecutive Ig-like domains span residues 941–1025 (PIFD…GRIS), 1068–1157 (PHFL…LELT), and 1167–1257 (PVIL…ARLD). A disulfide bridge links Cys-1089 with Cys-1141.

Belongs to the myotilin/palladin family. Interacts with TTN/titin, NEB, NEBL, ACTN2 and CARP.

It localises to the cytoplasm. The protein resides in the nucleus. It is found in the myofibril. Its subcellular location is the sarcomere. The protein localises to the z line. Component of the sarcomere that tethers together nebulin (skeletal muscle) and nebulette (cardiac muscle) to alpha-actinin, at the Z lines. The polypeptide is Myopalladin (Mypn) (Mus musculus (Mouse)).